A 112-amino-acid polypeptide reads, in one-letter code: Large ribosomal subunit protein uL22 (112 aa).

It belongs to the universal ribosomal protein uL22 family. Part of the 50S ribosomal subunit.

Functionally, this protein binds specifically to 23S rRNA; its binding is stimulated by other ribosomal proteins, e.g. L4, L17, and L20. It is important during the early stages of 50S assembly. It makes multiple contacts with different domains of the 23S rRNA in the assembled 50S subunit and ribosome. Its function is as follows. The globular domain of the protein is located near the polypeptide exit tunnel on the outside of the subunit, while an extended beta-hairpin is found that lines the wall of the exit tunnel in the center of the 70S ribosome. The protein is Large ribosomal subunit protein uL22 of Desulfovibrio desulfuricans (strain ATCC 27774 / DSM 6949 / MB).